Consider the following 306-residue polypeptide: Ornithine carbamoyltransferase (306 aa).

Residues 51–54, Gln-78, Arg-102, and 129–132 each bind carbamoyl phosphate; these read STRT and HPVQ. L-ornithine-binding positions include Asn-157, Asp-221, and 225-226; that span reads SM. Residues 261–262 and Arg-289 contribute to the carbamoyl phosphate site; that span reads CL.

This sequence belongs to the aspartate/ornithine carbamoyltransferase superfamily. OTCase family.

It is found in the cytoplasm. It catalyses the reaction carbamoyl phosphate + L-ornithine = L-citrulline + phosphate + H(+). It functions in the pathway amino-acid biosynthesis; L-arginine biosynthesis; L-arginine from L-ornithine and carbamoyl phosphate: step 1/3. Reversibly catalyzes the transfer of the carbamoyl group from carbamoyl phosphate (CP) to the N(epsilon) atom of ornithine (ORN) to produce L-citrulline. This is Ornithine carbamoyltransferase from Campylobacter hominis (strain ATCC BAA-381 / DSM 21671 / CCUG 45161 / LMG 19568 / NCTC 13146 / CH001A).